Reading from the N-terminus, the 942-residue chain is MEANAGDEGIHFQNYPFDFLEFLNHQRFEPMELYNHHEHAKAVAALPCAPPQYEYNHQTQPNHVQFASTSTSKPKEFKVEAPPSSSLSPSKKPDIATTQQFNNQPPITTTQTIFDSTFNAAQWGIVDLSSHQHLFNNLKRSLPVAQQLPAEDENKDDKNYFRRLKYLIDRRFPCTVCQKSFKQSSHLVQHMLVHTGERPYECNTCGRTYNHISSLIRHRRCHKEETEAEVTNSVPPPDGEAAAAAAVVAAAAAAMSEAAAGSAEMPVTGSEQSIPLPQDGPFTCTLCWKVFKKQSHLHQHQIIHTGEKPFSCSVCAKSFNRRESLKRHVKTHSDSMKVQCEVCGKSFRDTSYLLKHQATHTGERPDYKCELCGKSYAAPQSLLRHKQVHEQGLALQQPMVQQQQPLSEVIKEPTSSVTIEAASLLGTDVSNVGPAAISVIGKIGSFFSQSSLQKPPSVINNANKNFCCNVCGRGFGRRETLKRHERIHTGEKPHQCSVCGKRFRESFHLTKHHVVHTRERPYKCELCGKVFGYPQSLTRHKQIHRLQLPCTVATGTLPPDRLTFGCTDCGERFPDSFHLMNHKELHMNEKPYVCDTCGKCFGFIENLMWHKLVHQTAAERLHPISQCQDVAESQQVNCLETTAPSDVSGAEVAAAAAAAGVVASPFEEHPVVPSGERFSCSICGQSFKHFLGLVTHKYVHLVRRTLACNVCGQNFAGAYDLLLHRRTHLQKRHFTCSVCGKRFWEAALLMRHQRCHTEERPYRCTICGRGFLHSWYLRQHKVVHTGERAYKCALCNKRFAQSSSLAEHQRLHIVARPQRCPTCGKTFRYRSNLLEHQRVHLGEKVYRCDQCGKSFFYISSILRHQRSHDAKPDLRCSCCLKLFKDPKYFSKHVQTHQGGRPFKCGACGEAFSNTYGLKKHRHAHKMERLAAAAALVEGQKTL.

The disordered stretch occupies residues 66 to 106 (FASTSTSKPKEFKVEAPPSSSLSPSKKPDIATTQQFNNQPP). Over residues 96–106 (ATTQQFNNQPP) the composition is skewed to polar residues. C2H2-type zinc fingers lie at residues 172-194 (FPCT…MLVH), 200-222 (YECN…RRCH), 282-304 (FTCT…QIIH), 310-332 (FSCS…VKTH), 338-360 (VQCE…QATH), 367-389 (YKCE…KQVH), 466-488 (FCCN…ERIH), 494-516 (HQCS…HVVH), 522-544 (YKCE…KQIH), 564-586 (FGCT…KELH), 592-614 (YVCD…KLVH), 678-700 (FSCS…KYVH), 706-728 (LACN…RRTH), 734-756 (FTCS…QRCH), 762-784 (YRCT…KVVH), 790-812 (YKCA…QRLH), 818-840 (QRCP…QRVH), 846-868 (YRCD…QRSH), 874-896 (LRCS…VQTH), and 902-924 (FKCG…RHAH).

Belongs to the krueppel C2H2-type zinc-finger protein family.

It is found in the nucleus. Its function is as follows. May be involved in transcriptional regulation. The sequence is that of Zinc finger protein 865 (znf865) from Xenopus tropicalis (Western clawed frog).